The sequence spans 165 residues: Pyruvoyl-dependent arginine decarboxylase 1 (165 aa).

Pyruvic acid (Ser) is present on Ser45.

Belongs to the PdaD family. Pyruvate serves as cofactor.

The enzyme catalyses L-arginine + H(+) = agmatine + CO2. The sequence is that of Pyruvoyl-dependent arginine decarboxylase 1 (pdaD1) from Methanosarcina acetivorans (strain ATCC 35395 / DSM 2834 / JCM 12185 / C2A).